The following is a 1224-amino-acid chain: Period circadian protein (1224 aa).

Over residues 1 to 15 the composition is skewed to polar residues; it reads MEGGESTESTHNTKV. Residues 1-175 form a disordered region; sequence MEGGESTEST…AAQSFPIPSP (175 aa). A compositionally biased stretch (low complexity) spans 16 to 47; sequence SDSAYSNSCSNSQSQRSGSSKSRLSGSHSSGS. The short motif at 66–79 is the Nuclear localization signal element; that stretch reads KRNKDKSRKKKKNK. The span at 66–79 shows a compositional bias: basic residues; that stretch reads KRNKDKSRKKKKNK. Residues 121–133 show a composition bias toward basic and acidic residues; it reads ELQDQQHGEDHSE. PAS domains follow at residues 238–373 and 391–497; these read DSFC…ATPI and FAIR…RVFQ. 5 disordered regions span residues 632-764, 788-807, 874-927, 978-1008, and 1094-1224; these read VTAP…GTAA, KKHR…SAND, GGSG…GPSS, TPTS…QAAA, and TPAQ…HGDG. Positions 675 to 693 are enriched in polar residues; it reads NFTTASNIHMSSVTNTSIA. 26 repeat units span residues 694–695, 697–698, 699–700, 701–702, 703–704, 705–706, 707–708, 709–710, 711–712, 713–714, 715–716, 717–718, 719–720, 721–722, 723–724, 725–726, 727–728, 729–730, 731–732, 733–734, 735–736, 737–738, 739–740, 741–742, 743–744, and 745–746. The span at 694–752 shows a compositional bias: gly residues; it reads GTGGTGTGTGTGTGTGTGTGTGTGTGTGTGTGTGTGTGTGTGTGTGTGTGNGTNSGTGT. The segment at 694-754 is 30 X 2 AA approximate tandem repeats of G-[TN]; that stretch reads GTGGTGTGTG…GTNSGTGTGT (61 aa). A 27; approximate repeat occupies 747-748; sequence NS. 3 consecutive repeat copies span residues 749–750, 751–752, and 753–754. The segment at 749 to 868 is regulates the rhythm of species-specific courtship song; that stretch reads GTGTGTASSS…GTGGVGSGGA (120 aa). Over residues 794–805 the composition is skewed to basic and acidic residues; the sequence is RGRTGEKSKKSA. Positions 895 to 907 are enriched in gly residues; that stretch reads GTPGGAGGGGGAG. Residues 908-927 are compositionally biased toward low complexity; it reads AAAAAGASSSVGSSTPGPSS. 2 stretches are compositionally biased toward polar residues: residues 1094–1117 and 1143–1154; these read TPAQ…SSAA and PPCSSSNPANNK. Residues 1158-1177 are compositionally biased toward low complexity; sequence DSNGNSDDMDGSSFSSFYSS. A compositionally biased stretch (basic and acidic residues) spans 1209–1224; sequence KIMEHPEEDQTQHGDG.

As to quaternary structure, forms a heterodimer with timeless (TIM); the complex then translocates into the nucleus. A proportion of the protein exists as homodimer. In terms of processing, phosphorylated with a circadian rhythmicity, probably by the double-time protein (dbt). Phosphorylation could be implicated in the stability of per monomer and in the formation of heterodimer per-tim. Expressed in neural tissues and in several nonneural tissues of the abdomen. Malpighian tubules contain a circadian pacemaker that functions independently of the brain. Expression oscillates in all tissues studied except for the ovary. PER-A isoforms are mainly expressed in adult's head.

The protein resides in the nucleus. It localises to the cytoplasm. The protein localises to the perinuclear region. Its subcellular location is the cytosol. Essential for biological clock functions. Determines the period length of circadian and ultradian rhythms; an increase in PER dosage leads to shortened circadian rhythms and a decrease leads to lengthened circadian rhythms. Essential for the circadian rhythmicity of locomotor activity, eclosion behavior, and for the rhythmic component of the male courtship song that originates in the thoracic nervous system. The biological cycle depends on the rhythmic formation and nuclear localization of the TIM-PER complex. Light induces the degradation of TIM, which promotes elimination of PER. Nuclear activity of the heterodimer coordinatively regulates PER and TIM transcription through a negative feedback loop. Behaves as a negative element in circadian transcriptional loop. Does not appear to bind DNA, suggesting indirect transcriptional inhibition. Required for binding of cwo to the E box regions in the promoters of target genes of the transcriptional activator Clock, probably by binding to Clock-cycle heterodimers, reducing their affinity for E box binding and allowing cwo to bind instead. This is Period circadian protein (per) from Drosophila melanogaster (Fruit fly).